The sequence spans 504 residues: Anaerobic nitric oxide reductase transcription regulator NorR (504 aa).

Asp-57 is modified (4-aspartylphosphate). The region spanning 187-416 (MIGLSPGMTQ…LEHAIHRAVV (230 aa)) is the Sigma-54 factor interaction domain. ATP is bound by residues 215-222 (GETGTGKE) and 278-287 (ADNGTLFLDE). The H-T-H motif DNA-binding region spans 479 to 498 (WAASARMLETDVANLHRLAK).

It participates in nitrogen metabolism; nitric oxide reduction. In terms of biological role, required for the expression of anaerobic nitric oxide (NO) reductase, acts as a transcriptional activator for at least the norVW operon. Activation also requires sigma-54. This Escherichia fergusonii (strain ATCC 35469 / DSM 13698 / CCUG 18766 / IAM 14443 / JCM 21226 / LMG 7866 / NBRC 102419 / NCTC 12128 / CDC 0568-73) protein is Anaerobic nitric oxide reductase transcription regulator NorR.